Reading from the N-terminus, the 236-residue chain is UPF0502 protein BamMC406_5439 (236 aa).

Belongs to the UPF0502 family.

The polypeptide is UPF0502 protein BamMC406_5439 (Burkholderia ambifaria (strain MC40-6)).